Here is a 304-residue protein sequence, read N- to C-terminus: D-alanine--D-alanine ligase (304 aa).

The ATP-grasp domain maps to 103–299; sequence KLIWQALGLP…FADLCIEILK (197 aa). 129-184 lines the ATP pocket; the sequence is EEKLGLPMFVKPAAEGSSVGVVKVKEKGRLKSVYEELKHLQGEIIAERFIGGGEYS. Mg(2+) contacts are provided by Asp253, Glu266, and Asn268.

Belongs to the D-alanine--D-alanine ligase family. Mg(2+) serves as cofactor. It depends on Mn(2+) as a cofactor.

It localises to the cytoplasm. The enzyme catalyses 2 D-alanine + ATP = D-alanyl-D-alanine + ADP + phosphate + H(+). It functions in the pathway cell wall biogenesis; peptidoglycan biosynthesis. In terms of biological role, cell wall formation. The sequence is that of D-alanine--D-alanine ligase from Neisseria gonorrhoeae (strain ATCC 700825 / FA 1090).